Reading from the N-terminus, the 1399-residue chain is DNA-directed RNA polymerase subunit beta' (1399 aa).

Zn(2+) is bound by residues Cys-71, Cys-73, Cys-86, and Cys-89. Asp-462, Asp-464, and Asp-466 together coordinate Mg(2+). Residues Cys-810, Cys-884, Cys-891, and Cys-894 each coordinate Zn(2+). The disordered stretch occupies residues 1379-1399 (KQAAIVPSQPEPQPLALPPAE). The span at 1387-1399 (QPEPQPLALPPAE) shows a compositional bias: pro residues.

The protein belongs to the RNA polymerase beta' chain family. The RNAP catalytic core consists of 2 alpha, 1 beta, 1 beta' and 1 omega subunit. When a sigma factor is associated with the core the holoenzyme is formed, which can initiate transcription. It depends on Mg(2+) as a cofactor. Requires Zn(2+) as cofactor.

It carries out the reaction RNA(n) + a ribonucleoside 5'-triphosphate = RNA(n+1) + diphosphate. Its function is as follows. DNA-dependent RNA polymerase catalyzes the transcription of DNA into RNA using the four ribonucleoside triphosphates as substrates. In Bradyrhizobium sp. (strain BTAi1 / ATCC BAA-1182), this protein is DNA-directed RNA polymerase subunit beta'.